The chain runs to 136 residues: Large-conductance mechanosensitive channel (136 aa).

2 helical membrane-spanning segments follow: residues 10 to 30 (FAMRGNVVDLAVGVIIGAAFG) and 76 to 96 (GVFIQNVFDFLIVAFAIFMAI).

The protein belongs to the MscL family. As to quaternary structure, homopentamer.

The protein resides in the cell inner membrane. Functionally, channel that opens in response to stretch forces in the membrane lipid bilayer. May participate in the regulation of osmotic pressure changes within the cell. This Escherichia coli O139:H28 (strain E24377A / ETEC) protein is Large-conductance mechanosensitive channel.